Consider the following 413-residue polypeptide: Histidine--tRNA ligase (413 aa).

It belongs to the class-II aminoacyl-tRNA synthetase family. Homodimer.

The protein resides in the cytoplasm. It carries out the reaction tRNA(His) + L-histidine + ATP = L-histidyl-tRNA(His) + AMP + diphosphate + H(+). The polypeptide is Histidine--tRNA ligase (Geobacter sulfurreducens (strain ATCC 51573 / DSM 12127 / PCA)).